A 321-amino-acid polypeptide reads, in one-letter code: GDP-L-fucose synthase (321 aa).

14–20 (GGSGLVG) provides a ligand contact to NADP(+). Tyr-143 (proton donor/acceptor) is an active-site residue. NADP(+) contacts are provided by residues Lys-147, 170–173 (PTNV), and His-186. Substrate is bound by residues Lys-194, Trp-208, Arg-215, and Asp-277.

Belongs to the NAD(P)-dependent epimerase/dehydratase family. Fucose synthase subfamily. In terms of assembly, homodimer.

It catalyses the reaction GDP-beta-L-fucose + NADP(+) = GDP-4-dehydro-alpha-D-rhamnose + NADPH + H(+). Its pathway is nucleotide-sugar biosynthesis; GDP-L-fucose biosynthesis via de novo pathway; GDP-L-fucose from GDP-alpha-D-mannose: step 2/2. Functionally, catalyzes the two-step NADP-dependent conversion of GDP-4-dehydro-6-deoxy-D-mannose to GDP-fucose, involving an epimerase and a reductase reaction. This is GDP-L-fucose synthase from Homo sapiens (Human).